The following is a 281-amino-acid chain: Probable endonuclease 4 (281 aa).

Zn(2+) is bound by residues His-78, His-118, Glu-149, Asp-181, His-184, His-216, Asp-229, His-231, and Glu-260.

The protein belongs to the AP endonuclease 2 family. Requires Zn(2+) as cofactor.

It carries out the reaction Endonucleolytic cleavage to 5'-phosphooligonucleotide end-products.. Endonuclease IV plays a role in DNA repair. It cleaves phosphodiester bonds at apurinic or apyrimidinic (AP) sites, generating a 3'-hydroxyl group and a 5'-terminal sugar phosphate. The chain is Probable endonuclease 4 from Thermoplasma acidophilum (strain ATCC 25905 / DSM 1728 / JCM 9062 / NBRC 15155 / AMRC-C165).